The primary structure comprises 124 residues: Transcription initiation factor IIA subunit 2 (124 aa).

The protein belongs to the TFIIA subunit 2 family. As to quaternary structure, TFIIA is a heterodimer composed of the large TOA1 and the small TOA2 subunits.

The protein localises to the nucleus. Functionally, TFIIA is a component of the transcription machinery of RNA polymerase II and plays an important role in transcriptional activation. TFIIA in a complex with tbp mediates transcriptional activity. The protein is Transcription initiation factor IIA subunit 2 (TOA2) of Cryptococcus neoformans var. neoformans serotype D (strain JEC21 / ATCC MYA-565) (Filobasidiella neoformans).